The following is a 459-amino-acid chain: Probable cysteine protease ATG4 (459 aa).

Low complexity predominate over residues 77-90 (LPTTPSTTTLPYPL). The segment at 77 to 104 (LPTTPSTTTLPYPLKAVPTTPPESSSSS) is disordered. Cysteine 178 functions as the Nucleophile in the catalytic mechanism. Catalysis depends on residues aspartate 359 and histidine 361.

It belongs to the peptidase C54 family.

It is found in the cytoplasm. The protein resides in the nucleus. It localises to the preautophagosomal structure. The enzyme catalyses [protein]-C-terminal L-amino acid-glycyl-phosphatidylethanolamide + H2O = [protein]-C-terminal L-amino acid-glycine + a 1,2-diacyl-sn-glycero-3-phosphoethanolamine. In terms of biological role, cysteine protease that plays a key role in cytoplasm to vacuole transport (Cvt) and autophagy by mediating both proteolytic activation and delipidation of ATG8. Required for selective autophagic degradation of the nucleus (nucleophagy) as well as for mitophagy which contributes to regulate mitochondrial quantity and quality by eliminating the mitochondria to a basal level to fulfill cellular energy requirements and preventing excess ROS production. The protease activity is required for proteolytic activation of ATG8: cleaves the C-terminal amino acid of ATG8 to reveal a C-terminal glycine. ATG8 ubiquitin-like activity requires the exposure of the glycine at the C-terminus for its conjugation to phosphatidylethanolamine (PE) and its insertion to membranes, which is necessary for autophagy. The ATG8-PE conjugate mediates tethering between adjacent membranes and stimulates membrane hemifusion, leading to expansion of the autophagosomal membrane during autophagy. In addition to the protease activity, also catalyzes deconjugation of PE-conjugated forms of ATG8 during macroautophagy: ATG8 delipidation is required to release the protein from membranes, which facilitates multiple events during macroautophagy, and especially for efficient autophagosome biogenesis, the assembly of ATG9-containing tubulovesicular clusters into phagophores/autophagosomes, and for the disassembly of PAS-associated ATG components. ATG8 delipidation by ATG4 also recycles ATG8-PE generated on inappropriate membranes to maintain a reservoir of unlipidated ATG8 that is required for autophagosome formation at the PAS. The sequence is that of Probable cysteine protease ATG4 (ATG4) from Cryphonectria parasitica (Chestnut blight fungus).